We begin with the raw amino-acid sequence, 507 residues long: Probable cytosol aminopeptidase (507 aa).

Residues lysine 271 and aspartate 276 each contribute to the Mn(2+) site. Lysine 283 is a catalytic residue. Residues aspartate 294, aspartate 353, and glutamate 355 each contribute to the Mn(2+) site. Residue arginine 357 is part of the active site.

It belongs to the peptidase M17 family. It depends on Mn(2+) as a cofactor.

It localises to the cytoplasm. It carries out the reaction Release of an N-terminal amino acid, Xaa-|-Yaa-, in which Xaa is preferably Leu, but may be other amino acids including Pro although not Arg or Lys, and Yaa may be Pro. Amino acid amides and methyl esters are also readily hydrolyzed, but rates on arylamides are exceedingly low.. The enzyme catalyses Release of an N-terminal amino acid, preferentially leucine, but not glutamic or aspartic acids.. Functionally, presumably involved in the processing and regular turnover of intracellular proteins. Catalyzes the removal of unsubstituted N-terminal amino acids from various peptides. The polypeptide is Probable cytosol aminopeptidase (Nitratidesulfovibrio vulgaris (strain ATCC 29579 / DSM 644 / CCUG 34227 / NCIMB 8303 / VKM B-1760 / Hildenborough) (Desulfovibrio vulgaris)).